A 316-amino-acid chain; its full sequence is Protein lifeguard 2 (316 aa).

A disordered region spans residues Met-1–Pro-53. Transmembrane regions (helical) follow at residues Val-106–Phe-126, Pro-138–Cys-158, and Phe-165–Met-185. Asn-191 carries N-linked (GlcNAc...) asparagine glycosylation. A run of 4 helical transmembrane segments spans residues Ser-194–Phe-214, Gly-225–Leu-245, Val-250–Ala-270, and Ile-290–Leu-310.

This sequence belongs to the BI1 family. LFG subfamily. Interacts with FAS/TNFRSF6 and BAX.

It is found in the cell membrane. The protein resides in the membrane raft. Its subcellular location is the postsynaptic cell membrane. Functionally, antiapoptotic protein which protects cells uniquely from Fas-induced apoptosis. Regulates Fas-mediated apoptosis in neurons by interfering with caspase-8 activation. Plays a role in cerebellar development by affecting cerebellar size, internal granular layer (IGL) thickness, and Purkinje cell (PC) development. The polypeptide is Protein lifeguard 2 (FAIM2) (Pongo abelii (Sumatran orangutan)).